The chain runs to 178 residues: ATP synthase subunit b, chloroplastic (178 aa).

The helical transmembrane segment at 23–43 (IFETNIINLAAVVAIVISFVG) threads the bilayer.

This sequence belongs to the ATPase B chain family. In terms of assembly, F-type ATPases have 2 components, F(1) - the catalytic core - and F(0) - the membrane proton channel. F(1) has five subunits: alpha(3), beta(3), gamma(1), delta(1), epsilon(1). F(0) has four main subunits: a(1), b(1), b'(1) and c(10-14). The alpha and beta chains form an alternating ring which encloses part of the gamma chain. F(1) is attached to F(0) by a central stalk formed by the gamma and epsilon chains, while a peripheral stalk is formed by the delta, b and b' chains.

It is found in the plastid. Its subcellular location is the chloroplast thylakoid membrane. In terms of biological role, f(1)F(0) ATP synthase produces ATP from ADP in the presence of a proton or sodium gradient. F-type ATPases consist of two structural domains, F(1) containing the extramembraneous catalytic core and F(0) containing the membrane proton channel, linked together by a central stalk and a peripheral stalk. During catalysis, ATP synthesis in the catalytic domain of F(1) is coupled via a rotary mechanism of the central stalk subunits to proton translocation. Component of the F(0) channel, it forms part of the peripheral stalk, linking F(1) to F(0). The protein is ATP synthase subunit b, chloroplastic of Tetradesmus obliquus (Green alga).